The chain runs to 554 residues: (Z)-gamma-bisabolene synthase 1 (554 aa).

Mg(2+) contacts are provided by aspartate 306, aspartate 310, aspartate 450, and aspartate 458. Positions 306–310 match the DDXXD motif motif; it reads DDACD.

This sequence belongs to the terpene synthase family. Tpsa subfamily. It depends on Mg(2+) as a cofactor. Requires Mn(2+) as cofactor. Predominantly expressed in roots. Expressed in the cortex and the sub-epidermal layers of roots. Also detected in leaf hydathodes and flower stigmata.

The protein localises to the cytoplasm. It catalyses the reaction (2E,6E)-farnesyl diphosphate = (Z)-gamma-bisabolene + diphosphate. It participates in secondary metabolite biosynthesis; terpenoid biosynthesis. In terms of biological role, involved in sesquiterpene (C15) biosynthesis. The major product is (Z)-gamma-bisabolene with minor amounts of (E)-nerolidol and alpha-bisabolol. This Arabidopsis thaliana (Mouse-ear cress) protein is (Z)-gamma-bisabolene synthase 1 (TPS12).